Reading from the N-terminus, the 802-residue chain is Mitogen-activated protein kinase kinase kinase 20 (802 aa).

Ser-2 bears the N-acetylserine mark. A phosphoserine mark is found at Ser-2, Ser-3, and Ser-7. Residues 16–277 (LQFFENCGGG…NLPDQCNSFL (262 aa)) form the Protein kinase domain. Residues 22–30 (CGGGSFGSV) and Lys-45 contribute to the ATP site. Asp-133 functions as the Proton acceptor in the catalytic mechanism. Phosphothreonine; by autocatalysis is present on Thr-161. Ser-165 bears the Phosphoserine; by autocatalysis mark. Phosphoserine is present on residues Ser-275 and Ser-302. The segment at 287-308 (IEATLERLKKLERDLSFKEQEL) is leucine-zipper. An SAM domain is found at 339–410 (WTEDDVYFWV…KSAIEKLTHD (72 aa)). 3 positions are modified to phosphoserine: Lys-434, Gln-453, and Ser-567. The residue at position 586 (Thr-586) is a Phosphothreonine. Phosphoserine is present on residues Ser-587, Ser-593, and Ser-599. Over residues 624–642 (YQQITPSINPSRSSSPTQY) the composition is skewed to polar residues. Positions 624–802 (YQQITPSINP…RGNYRGRRNF (179 aa)) are disordered. Thr-628 is subject to Phosphothreonine. 5 positions are modified to phosphoserine: Ser-634, Ser-638, Ser-649, Ser-650, and Ser-661. Residues 643 to 666 (GLSRNFSSLNLSSRDSGFSSLNDS) show a composition bias toward low complexity. Basic and acidic residues predominate over residues 667–678 (SSERGRYSDRSR). The segment at 670-713 (RGRYSDRSRNKYYRGSVSLNSSPKGRYGGKSQHSTPSRERYSGK) is sensing domain (S). Phosphoserine is present on residues Ser-685, Ser-720, Ser-727, and Ser-733. Over residues 728 to 741 (PDFKRSPNDHDRRV) the composition is skewed to basic and acidic residues. Thr-744 is subject to Phosphothreonine. Residues 776-802 (RKKTHRQLSAKTSKERTRGNYRGRRNF) are C-terminal domain (CTD).

The protein belongs to the protein kinase superfamily. STE Ser/Thr protein kinase family. MAP kinase kinase kinase subfamily. As to quaternary structure, homodimer. Interacts with ZNF33A. Component of a signaling complex containing at least AKAP13, PKN1, MAPK14, MAP3K20 and MAP2K3. Within this complex, AKAP13 interacts directly with PKN1, which in turn recruits MAPK14, MAP2K3 and MAP3K20. Interacts with EIF2AK4/GCN2; promoting EIF2AK4/GCN2 kinase activity. Interacts with isoform ZAKbeta. In terms of assembly, interacts with isoform ZAKalpha. It depends on Mg(2+) as a cofactor. Activated by phosphorylation by PKN1, followed by autophosphorylation on Thr-161 and Ser-165. Autophosphorylation in response to ribotoxic stress promotes dissociation from colliding ribosomes and activation.

Its subcellular location is the cytoplasm. It localises to the nucleus. It catalyses the reaction L-seryl-[protein] + ATP = O-phospho-L-seryl-[protein] + ADP + H(+). It carries out the reaction L-threonyl-[protein] + ATP = O-phospho-L-threonyl-[protein] + ADP + H(+). Activated in response to stress, such as ribosomal stress, osmotic shock and ionizing radiation. Activated by phosphorylation by PKN1, followed by autophosphorylation on Thr-161 and Ser-165. Stress-activated component of a protein kinase signal transduction cascade that promotes programmed cell death in response to various stress, such as ribosomal stress, osmotic shock and ionizing radiation. Acts by catalyzing phosphorylation of MAP kinase kinases, leading to activation of the JNK (MAPK8/JNK1, MAPK9/JNK2 and/or MAPK10/JNK3) and MAP kinase p38 (MAPK11, MAPK12, MAPK13 and/or MAPK14) pathways. Activates JNK through phosphorylation of MAP2K4/MKK4 and MAP2K7/MKK7, and MAP kinase p38 gamma (MAPK12) via phosphorylation of MAP2K3/MKK3 and MAP2K6/MKK6. Involved in stress associated with adrenergic stimulation: contributes to cardiac decompensation during periods of acute cardiac stress. May be involved in regulation of S and G2 cell cycle checkpoint by mediating phosphorylation of CHEK2. In terms of biological role, key component of the stress-activated protein kinase signaling cascade in response to ribotoxic stress or UV-B irradiation. Acts as the proximal sensor of ribosome collisions during the ribotoxic stress response (RSR). Directly binds to the ribosome by inserting its flexible C-terminus into the ribosomal intersubunit space, thereby acting as a sentinel for colliding ribosomes. Upon ribosome collisions, activates either the stress-activated protein kinase signal transduction cascade or the integrated stress response (ISR), leading to programmed cell death or cell survival, respectively. Dangerous levels of ribosome collisions trigger the autophosphorylation and activation of MAP3K20, which dissociates from colliding ribosomes and phosphorylates MAP kinase kinases, leading to activation of the JNK and MAP kinase p38 pathways that promote programmed cell death. Less dangerous levels of ribosome collisions trigger the integrated stress response (ISR): MAP3K20 activates EIF2AK4/GCN2 independently of its protein-kinase activity, promoting EIF2AK4/GCN2-mediated phosphorylation of EIF2S1/eIF-2-alpha. Also acts as a histone kinase by phosphorylating histone H3 at 'Ser-28' (H3S28ph). Its function is as follows. Isoform that lacks the C-terminal region that mediates ribosome-binding: does not act as a sensor of ribosome collisions in response to ribotoxic stress. May act as an antagonist of isoform ZAKalpha: interacts with isoform ZAKalpha, leading to decrease the expression of isoform ZAKalpha. This chain is Mitogen-activated protein kinase kinase kinase 20, found in Mus musculus (Mouse).